Reading from the N-terminus, the 466-residue chain is Putative multidrug resistance protein MdtD (466 aa).

14 consecutive transmembrane segments (helical) span residues 11–31 (LWIV…VNTA), 48–68 (SVIV…GWLA), 71–91 (IGVK…SLLC), 105–125 (VIQG…VMKI), 137–157 (FVTL…GFLV), 164–184 (WIFL…WFLM), 194–214 (FDIS…LALD), 218–238 (SLGI…IALL), 262–282 (FSIG…LPFM), 286–306 (FLQL…VPMV), 328–347 (VLIV…ALVA), 351–370 (WIWM…AIRF), 403–423 (LGVS…MAAG), and 429–449 (MVFI…ALIF).

The protein belongs to the major facilitator superfamily. TCR/Tet family.

The protein localises to the cell inner membrane. The polypeptide is Putative multidrug resistance protein MdtD (Pectobacterium carotovorum subsp. carotovorum (strain PC1)).